Here is a 320-residue protein sequence, read N- to C-terminus: L-lactate dehydrogenase (320 aa).

Residues 15–16 (FV), D37, K42, Y68, and 82–83 (GA) contribute to the NAD(+) site. Substrate-binding positions include Q85, R91, and 123–126 (NPVD). Residues 121-123 (ATN) and S146 contribute to the NAD(+) site. 151 to 154 (DSAR) is a binding site for substrate. Residues R156 and 168 to 172 (QNVHA) each bind beta-D-fructose 1,6-bisphosphate. Residue H178 is the Proton acceptor of the active site. The residue at position 223 (Y223) is a Phosphotyrosine. T232 contacts substrate.

This sequence belongs to the LDH/MDH superfamily. LDH family. Homotetramer.

The protein resides in the cytoplasm. It carries out the reaction (S)-lactate + NAD(+) = pyruvate + NADH + H(+). It functions in the pathway fermentation; pyruvate fermentation to lactate; (S)-lactate from pyruvate: step 1/1. Allosterically activated by fructose 1,6-bisphosphate (FBP). Catalyzes the conversion of lactate to pyruvate. This chain is L-lactate dehydrogenase, found in Bacillus subtilis (strain 168).